Here is a 213-residue protein sequence, read N- to C-terminus: HTH-type transcriptional regulator SrpR (213 aa).

One can recognise an HTH tetR-type domain in the interval glutamate 10 to leucine 70. Positions threonine 33 to phenylalanine 52 form a DNA-binding region, H-T-H motif.

Functionally, in conjunction with SrpS represses the srpABC operon. The polypeptide is HTH-type transcriptional regulator SrpR (srpR) (Pseudomonas putida (Arthrobacter siderocapsulatus)).